The sequence spans 273 residues: HUWE1-associated protein modifying stress responses 2 (273 aa).

3 disordered regions span residues 146–181 (GKVP…SSSV), 204–230 (ISMR…FLED), and 251–273 (KRTS…NRMV). Positions 149-165 (PPAPPPPRTPRTPPKPP) are enriched in pro residues. Composition is skewed to polar residues over residues 170-181 (SQAVATESSSSV), 208-218 (SGDSPQDSGVA), and 254-267 (SAQC…SPIQ). A nuclear localization signal region spans residues 249-273 (IRKRTSAQCSDGITDSPIQKRNRMV).

This sequence belongs to the HAPSTR1 family. In terms of assembly, homooligomer. Heterooligomer with HAPSTR1; the interaction is direct and stabilizes HAPSTR1 independently of HUWE1. Interacts with HUWE1. Expressed in a tissue-restricted manner compared to HAPSTR1.

The protein resides in the nucleus. Functionally, together with HAPSTR1 plays a central regulatory role in the cellular response to molecular stressors, such as DNA damage, nutrient scarcity, and protein misfolding. Regulates these multiple stress response signaling pathways by stabilizing HAPSTR1, but also independently of HAPSTR1. This is HUWE1-associated protein modifying stress responses 2 from Homo sapiens (Human).